The chain runs to 1193 residues: Falcilysin (1193 aa).

Histidine 129 is a binding site for Zn(2+). Glutamate 132 acts as the Proton acceptor in catalysis. Positions 133 and 243 each coordinate Zn(2+). The interval 376 to 404 is disordered; that stretch reads DKTNNHNNNHSNNQSSENNGYSNGSHSSD. The span at 380–394 shows a compositional bias: low complexity; it reads NHNNNHSNNQSSENN. A compositionally biased stretch (polar residues) spans 395–404; the sequence is GYSNGSHSSD. A coiled-coil region spans residues 583 to 619; that stretch reads LLEGDENYAQEQENLEKQELKKRIENFNEQEKEQVIK.

This sequence belongs to the peptidase M16 family. As to quaternary structure, monomer. Component of the hemozoin formation complex (HFC) composed of falcipains FP2A and/or FP2B, plasmepsins PMII, PMIII/HAP and PMIV, heme detoxifying protein HDP and falcilysin FLN. The HFC complex is involved in hemoglobin degradation and detoxification of heme in the food vacuole during the asexual blood stage. Zn(2+) serves as cofactor. Does not require processing for targeting to the food vacuole or maturation.

It is found in the vacuole membrane. The protein resides in the plastid. The protein localises to the apicoplast. It localises to the vesicle. Its function is as follows. In the food vacuole, acts downstream of proteases plasmepsins PMI and PMII and falcipains during the catabolism of host hemoglobin by cleaving peptide fragments of alpha and beta hemoglobin subunits generated by PMI and PMII and falcipains. In the apicoplast, degrades apicoplast transit peptides after their cleavage. Prefers bulky hydrophobic amino acids in the P1' position at both acidic and neutral pH. At P2', prefers hydrophobic residues at acidic pH; at neutral pH, these same residues are abundant but prefers Arg. At P3', prefers hydrophobic residues, especially Met, at both pH conditions. At P4' and P5', prefers acidic residues at acidic pH, however, at neutral pH, the enzyme is less selective at these positions. The optimal site cleavage at acidic pH is YNEHS-|-FFMEE and, at neutral pH, MKRHS-|-FRMRG. This Plasmodium falciparum (isolate 3D7) protein is Falcilysin.